Consider the following 910-residue polypeptide: Leucine--tRNA ligase (910 aa).

The 'HIGH' region signature appears at 42-52; it reads PYPSGKLHMGH. Residues 668-672 carry the 'KMSKS' region motif; it reads KMSKS. Lys-671 serves as a coordination point for ATP.

Belongs to the class-I aminoacyl-tRNA synthetase family.

It localises to the cytoplasm. It carries out the reaction tRNA(Leu) + L-leucine + ATP = L-leucyl-tRNA(Leu) + AMP + diphosphate. This is Leucine--tRNA ligase from Neisseria meningitidis serogroup A / serotype 4A (strain DSM 15465 / Z2491).